The sequence spans 1265 residues: Protein diaphanous homolog 1 (1265 aa).

An N-acetylmethionine modification is found at M1. Residues 1-12 (MEPSGGGLGPGR) show a composition bias toward gly residues. Disordered regions lie at residues 1–42 (MEPS…FTLK) and 54–83 (SMRIKKEKEKPNSAHRNSSASYGDDPTAQS). Residue S22 is modified to Phosphoserine. Basic and acidic residues predominate over residues 54-65 (SMRIKKEKEKPN). Positions 67–83 (AHRNSSASYGDDPTAQS) are enriched in polar residues. A GBD/FH3 domain is found at 84–449 (LQDISDDQVL…QIVLHKNGTD (366 aa)). Residues 474–568 (VEKSEAKATE…KKEMASLSAV (95 aa)) adopt a coiled-coil conformation. Residues 573-742 (SVSSSAAVPQ…PPPPGMGVPP (170 aa)) are disordered. Composition is skewed to pro residues over residues 594–628 (IPPPPPPPLPGGAVPPPPPPPLPAGTGIPPPPPLP) and 645–742 (IPPP…GVPP). The FH1 domain maps to 625–757 (PPLPGGACIS…FGIPAAPVLP (133 aa)). T761 is subject to Phosphothreonine. One can recognise an FH2 domain in the interval 762–1164 (PKKVYKPEVQ…MRRAKLAKEK (403 aa)). N6-acetyllysine occurs at positions 1050 and 1096. Y1114 is modified (phosphotyrosine). A coiled-coil region spans residues 1141-1185 (AVKENQKRRETEEKMRRAKLAKEKAEKERLEKQQKREQLIDMNAE). A DAD domain is found at 1187–1215 (DETGVMDSLLEALQSGAAFRRKRGPRQVN). S1247 carries the phosphoserine modification.

Belongs to the formin homology family. Diaphanous subfamily. As to quaternary structure, homodimer. Interacts with the GTP-bound form of RHOA. Interacts with RHOC, PFY1, MAPRE1, BAIAP2 and APC. Interacts with SCAI. Interacts with DCAF7, via FH2 domain. Interacts with NCDN. Interacts with OSBPL10, OSBPL2, VIM, TUBB and DYN1. In terms of processing, phosphorylation at Thr-761 is stimulated by cAMP and regulates stability, complex formation and mitochondrial movement. In terms of tissue distribution, expressed in testis. Present in Sertoli cells (at protein level).

Its subcellular location is the cell membrane. It is found in the cell projection. The protein resides in the ruffle membrane. It localises to the cytoplasm. The protein localises to the cytoskeleton. Its subcellular location is the microtubule organizing center. It is found in the centrosome. The protein resides in the spindle. It localises to the nucleus. Its function is as follows. Actin nucleation and elongation factor required for the assembly of F-actin structures, such as actin cables and stress fibers. Binds to the barbed end of the actin filament and slows down actin polymerization and depolymerization. Required for cytokinesis, and transcriptional activation of the serum response factor. DFR proteins couple Rho and Src tyrosine kinase during signaling and the regulation of actin dynamics. Functions as a scaffold protein for MAPRE1 and APC to stabilize microtubules and promote cell migration. Has neurite outgrowth promoting activity. Acts in a Rho-dependent manner to recruit PFY1 to the membrane. The MEMO1-RHOA-DIAPH1 signaling pathway plays an important role in ERBB2-dependent stabilization of microtubules at the cell cortex. It controls the localization of APC and CLASP2 to the cell membrane, via the regulation of GSK3B activity. In turn, membrane-bound APC allows the localization of the MACF1 to the cell membrane, which is required for microtubule capture and stabilization. Plays a role in the regulation of cell morphology and cytoskeletal organization. Required in the control of cell shape. Also acts as an actin nucleation and elongation factor in the nucleus by promoting nuclear actin polymerization inside the nucleus to drive serum-dependent SRF-MRTFA activity. This Rattus norvegicus (Rat) protein is Protein diaphanous homolog 1.